The following is a 437-amino-acid chain: Phosphomethylpyrimidine synthase (437 aa).

Residues asparagine 69, methionine 98, tyrosine 127, histidine 163, 185–187 (SRG), 226–229 (DACR), and glutamate 265 each bind substrate. Histidine 269 is a binding site for Zn(2+). Tyrosine 292 lines the substrate pocket. Histidine 333 is a Zn(2+) binding site. Cysteine 409, cysteine 412, and cysteine 416 together coordinate [4Fe-4S] cluster.

Belongs to the ThiC family. [4Fe-4S] cluster is required as a cofactor.

It catalyses the reaction 5-amino-1-(5-phospho-beta-D-ribosyl)imidazole + S-adenosyl-L-methionine = 4-amino-2-methyl-5-(phosphooxymethyl)pyrimidine + CO + 5'-deoxyadenosine + formate + L-methionine + 3 H(+). It functions in the pathway cofactor biosynthesis; thiamine diphosphate biosynthesis. Catalyzes the synthesis of the hydroxymethylpyrimidine phosphate (HMP-P) moiety of thiamine from aminoimidazole ribotide (AIR) in a radical S-adenosyl-L-methionine (SAM)-dependent reaction. The sequence is that of Phosphomethylpyrimidine synthase from Clostridium botulinum (strain Okra / Type B1).